Here is a 470-residue protein sequence, read N- to C-terminus: E3 SUMO-protein ligase EGR2 (470 aa).

The span at 126 to 141 (PPASTTASSSVTSASP) shows a compositional bias: low complexity. 3 disordered regions span residues 126-153 (PPAS…GVCT), 159-178 (PELD…SGCT), and 185-210 (PSAF…SYPS). Residues 190-202 (SPPSTTSTSSLAY) show a composition bias toward low complexity. Lys-247 carries the N6-acetyllysine; by EP300 modification. A compositionally biased stretch (gly residues) spans 275–291 (GPGAGVTGPGASGGGEG). The segment at 275-345 (GPGAGVTGPG…PYPCPAEGCD (71 aa)) is disordered. 3 C2H2-type zinc fingers span residues 337-361 (YPCP…IRIH), 367-389 (FQCR…IRTH), and 395-417 (FACD…TKIH). A disordered region spans residues 408–470 (DERKRHTKIH…ASCTSRTRTP (63 aa)). Residues 412 to 422 (RHTKIHLRQKE) are compositionally biased toward basic residues. Low complexity predominate over residues 426–439 (SAPSAPPSAQSSAS). The segment covering 440 to 450 (GPGGSQAGGSL) has biased composition (gly residues).

Belongs to the EGR C2H2-type zinc-finger protein family. Interacts with HCFC1. Interacts with WWP2. Interacts with UBC9. Interacts with CITED1. Interacts (via phosphorylated form) with SFN. Post-translationally, ubiquitinated by WWP2 leading to proteasomal degradation. Acetylated at Lys-247. May be deacetylated by HDAC6, HDAC10 or SIRT1. In terms of tissue distribution, expressed mainly in the thymus.

It localises to the nucleus. The protein operates within protein modification; protein sumoylation. In terms of biological role, sequence-specific DNA-binding transcription factor. Plays a role in hindbrain segmentation by regulating the expression of a subset of homeobox containing genes and in Schwann cell myelination by regulating the expression of genes involved in the formation and maintenance of myelin. Binds to two EGR2-consensus sites EGR2A (5'-CTGTAGGAG-3') and EGR2B (5'-ATGTAGGTG-3') in the HOXB3 enhancer and promotes HOXB3 transcriptional activation. Binds to specific DNA sites located in the promoter region of HOXA4, HOXB2 and ERBB2. Regulates hindbrain segmentation by controlling the expression of Hox genes, such as HOXA4, HOXB3 and HOXB2, and thereby specifying odd and even rhombomeres. Promotes the expression of HOXB3 in the rhombomere r5 and of HOXB3 in r3 and r5 in the hindbrain. Regulates myelination in the peripheral nervous system after birth, possibly by regulating the expression of myelin proteins, such as MPZ, and by promoting the differentiation of Schwann cells. Involved in the development of the jaw openener musculature, probably by playing a role in its innervation through trigeminal motor neurons. May play a role in adipogenesis, possibly by regulating the expression of CEBPB. E3 SUMO-protein ligase helping SUMO1 conjugation to its coregulators NAB1 and NAB2, whose sumoylation down-regulates EGR2 transcriptional activity. In Mus musculus (Mouse), this protein is E3 SUMO-protein ligase EGR2 (Egr2).